Reading from the N-terminus, the 744-residue chain is Protein zyg-11 homolog B (744 aa).

LRR repeat units follow at residues leucine 185–lysine 208, methionine 216–leucine 236, and lysine 237–glutamine 261.

Belongs to the zyg-11 family. Interacts with ELOC/Elongin C. Part of an E3 ubiquitin ligase complex including ZYG11B, CUL2 and Elongin BC.

In terms of biological role, serves as substrate adapter subunit in the E3 ubiquitin ligase complex ZYG11B-CUL2-Elongin BC. Acts redudantly with ZER1 to target substrates bearing N-terminal glycine degrons for proteasomal degradation. Involved in the clearance of proteolytic fragments generated by caspase cleavage during apoptosis since N-terminal glycine degrons are strongly enriched at caspase cleavage sites. Also important in the quality control of protein N-myristoylation in which N-terminal glycine degrons are conditionally exposed after a failure of N-myristoylation. The polypeptide is Protein zyg-11 homolog B (Mus musculus (Mouse)).